Here is a 3460-residue protein sequence, read N- to C-terminus: Reelin (3460 aa).

An N-terminal signal peptide occupies residues 1 to 25 (MERSGWARQTFLLALLLGATLRARA). One can recognise a Reelin domain in the interval 26-190 (AAGYYPRFSP…GAPTDVTVHP (165 aa)). An intrachain disulfide couples cysteine 40 to cysteine 126. The N-linked (GlcNAc...) asparagine glycan is linked to asparagine 140. Residues cysteine 154 and cysteine 178 are joined by a disulfide bond. 3 N-linked (GlcNAc...) asparagine glycosylation sites follow: asparagine 257, asparagine 289, and asparagine 305. An intrachain disulfide couples cysteine 539 to cysteine 580. The stretch at 592–603 (EFSTNHGRSWSL) is one BNR 1 repeat. A disulfide bond links cysteine 608 and cysteine 613. A glycan (N-linked (GlcNAc...) asparagine) is linked at asparagine 628. One can recognise an EGF-like 1 domain in the interval 670 to 701 (IGPSCLKFCSGRGQCTRHGCKCDPGFSGPACE). 2 disulfides stabilise this stretch: cysteine 674–cysteine 684 and cysteine 691–cysteine 700. The stretch at 798–809 (HYSYDNGITWKL) is one BNR 2 repeat. Cysteine 894 and cysteine 936 are joined by a disulfide. Residues 951–962 (EYSTNHGLTWHL) form a BNR 3 repeat. Intrachain disulfides connect cysteine 967/cysteine 974, cysteine 1033/cysteine 1043, and cysteine 1050/cysteine 1059. The 32-residue stretch at 1029 to 1060 (IGQQCPNMCSGHGSCDHGICRCDQGYQGTECH) folds into the EGF-like 2 domain. Residues 1156-1167 (QYSNNGGIQWHL) form a BNR 4 repeat. Asparagine 1266 carries an N-linked (GlcNAc...) asparagine glycan. Cysteines 1270 and 1309 form a disulfide. One copy of the BNR 5 repeat lies at 1322–1333 (QYSHDAGMSWFL). Cysteine 1338 and cysteine 1347 are disulfide-bonded. In terms of domain architecture, EGF-like 3 spans 1408–1441 (ISEPCPSYCSGHGDCISGVCFCDLGYTAAQGTCV). The stretch at 1534-1545 (QYSNDNGILWHL) is one BNR 6 repeat. Asparagine 1599 is a glycosylation site (N-linked (GlcNAc...) asparagine). Cysteine 1632 and cysteine 1672 are oxidised to a cystine. The stretch at 1685-1696 (QYSLNNGKDWHL) is one BNR 7 repeat. Residues cysteine 1701 and cysteine 1708 are joined by a disulfide bond. An N-linked (GlcNAc...) asparagine glycan is attached at asparagine 1749. Positions 1764 to 1795 (LASGCPWMCSGRGICDAGRCVCDRGFGGPYCV) constitute an EGF-like 4 domain. The BNR 8 repeat unit spans residues 1883-1894 (QFSISGGITWHL). Asparagine 1920 carries N-linked (GlcNAc...) asparagine glycosylation. One copy of the BNR 9 repeat lies at 2042–2053 (EFSRDFGATWHL). 2 residues coordinate Zn(2+): histidine 2060 and histidine 2073. In terms of domain architecture, EGF-like 5 spans 2128–2160 (IGPQCEEMCNGQGSCINGTKCICDPGYSGPTCK). 3 disulfide bridges follow: cysteine 2132–cysteine 2142, cysteine 2136–cysteine 2148, and cysteine 2150–cysteine 2159. An N-linked (GlcNAc...) asparagine glycan is attached at asparagine 2144. Glutamate 2178 provides a ligand contact to Zn(2+). Cysteine 2194 and cysteine 2234 form a disulfide bridge. Residues 2249–2260 (QYSLNGGLSWSL) form a BNR 10 repeat. Glutamate 2263 serves as a coordination point for Zn(2+). Asparagine 2268 and asparagine 2316 each carry an N-linked (GlcNAc...) asparagine glycan. Disulfide bonds link cysteine 2347–cysteine 2386, cysteine 2392–cysteine 2558, and cysteine 2543–cysteine 2583. Zn(2+) contacts are provided by glutamate 2396, glutamate 2398, and histidine 2459. The BNR 11 repeat unit spans residues 2398–2409 (EYSVDLGLSWHP). The region spanning 2477–2508 (IGDGCIDMCSGHGRCIQGNCVCDEQWGGLYCD) is the EGF-like 6 domain. A glycan (N-linked (GlcNAc...) asparagine) is linked at asparagine 2568. BNR repeat units lie at residues 2597 to 2608 (EYSVNGGITWNL) and 2777 to 2788 (QYSTDFGVSWNY). 5 disulfide bridges follow: cysteine 2793–cysteine 2800, cysteine 2856–cysteine 2866, cysteine 2860–cysteine 2871, cysteine 2873–cysteine 2882, and cysteine 2918–cysteine 2965. The EGF-like 7 domain occupies 2852-2883 (LGPGCLDNCRGHGDCLREQCICDPGYSGPNCY). N-linked (GlcNAc...) asparagine glycosylation is present at asparagine 2961. The BNR 14 repeat unit spans residues 2978-2989 (DYSTDGGITWTL). 2 N-linked (GlcNAc...) asparagine glycosylation sites follow: asparagine 3015 and asparagine 3072. The BNR 15 repeat unit spans residues 3142–3154 (EYTKDARSDSWQL). Cysteine 3159 and cysteine 3169 are joined by a disulfide. The N-linked (GlcNAc...) asparagine glycan is linked to asparagine 3184. The region spanning 3227–3259 (IGEACPKLCSGHGYCTTGAICICDESFQGDDCS) is the EGF-like 8 domain. 4 disulfides stabilise this stretch: cysteine 3231/cysteine 3241, cysteine 3235/cysteine 3247, cysteine 3249/cysteine 3258, and cysteine 3295/cysteine 3345. A BNR 16 repeat occupies 3362-3373 (QYSVNNGITWHV). Asparagine 3411 and asparagine 3438 each carry an N-linked (GlcNAc...) asparagine glycan.

It belongs to the reelin family. As to quaternary structure, oligomer of disulfide-linked homodimers. N-glycosylated and to a lesser extent also O-glycosylated. As to expression, abundantly produced during brain ontogenesis by the Cajal-Retzius cells and other pioneer neurons located in the telencephalic marginal zone and by granule cells of the external granular layer of the cerebellum. In adult brain, preferentially expressed in GABAergic interneurons of prefrontal cortices, temporal cortex, hippocampus and glutamatergic granule cells of cerebellum. Expression is reduced to about 50% in patients with schizophrenia. Also expressed in fetal and adult liver.

It is found in the secreted. It localises to the extracellular space. Its subcellular location is the extracellular matrix. In terms of biological role, extracellular matrix serine protease secreted by pioneer neurons that plays a role in layering of neurons in the cerebral cortex and cerebellum by coordinating cell positioning during neurodevelopment. Regulates microtubule function in neurons and neuronal migration. Binding to the extracellular domains of lipoprotein receptors VLDLR and LRP8/APOER2 induces tyrosine phosphorylation of DAB1 and modulation of TAU phosphorylation. Affects migration of sympathetic preganglionic neurons in the spinal cord, where it seems to act as a barrier to neuronal migration. Enzymatic activity is important for the modulation of cell adhesion. This chain is Reelin (RELN), found in Homo sapiens (Human).